The sequence spans 370 residues: Queuine tRNA-ribosyltransferase (370 aa).

Asp-89 acts as the Proton acceptor in catalysis. Substrate is bound by residues 89–93 (DSGGF), Asp-143, Gln-187, and Gly-214. Residues 245–251 (GVGKPED) are RNA binding. Asp-264 (nucleophile) is an active-site residue. Positions 269-273 (TRNAR) are RNA binding; important for wobble base 34 recognition. Residues Cys-302, Cys-304, Cys-307, and His-333 each contribute to the Zn(2+) site.

This sequence belongs to the queuine tRNA-ribosyltransferase family. As to quaternary structure, homodimer. Within each dimer, one monomer is responsible for RNA recognition and catalysis, while the other monomer binds to the replacement base PreQ1. Zn(2+) serves as cofactor.

It carries out the reaction 7-aminomethyl-7-carbaguanine + guanosine(34) in tRNA = 7-aminomethyl-7-carbaguanosine(34) in tRNA + guanine. The protein operates within tRNA modification; tRNA-queuosine biosynthesis. In terms of biological role, catalyzes the base-exchange of a guanine (G) residue with the queuine precursor 7-aminomethyl-7-deazaguanine (PreQ1) at position 34 (anticodon wobble position) in tRNAs with GU(N) anticodons (tRNA-Asp, -Asn, -His and -Tyr). Catalysis occurs through a double-displacement mechanism. The nucleophile active site attacks the C1' of nucleotide 34 to detach the guanine base from the RNA, forming a covalent enzyme-RNA intermediate. The proton acceptor active site deprotonates the incoming PreQ1, allowing a nucleophilic attack on the C1' of the ribose to form the product. After dissociation, two additional enzymatic reactions on the tRNA convert PreQ1 to queuine (Q), resulting in the hypermodified nucleoside queuosine (7-(((4,5-cis-dihydroxy-2-cyclopenten-1-yl)amino)methyl)-7-deazaguanosine). The chain is Queuine tRNA-ribosyltransferase from Baumannia cicadellinicola subsp. Homalodisca coagulata.